The sequence spans 412 residues: P-selectin glycoprotein ligand 1 (412 aa).

An N-terminal signal peptide occupies residues 1-17; that stretch reads MPLQLLLLLILLGPGNS. Positions 18–41 are excised as a propeptide; sequence LQLWDTWADEAEKALGPLLARDRR. At 18-320 the chain is on the extracellular side; it reads LQLWDTWADE…APDHISVKQC (303 aa). At Gln42 the chain carries Pyrrolidone carboxylic acid. 3 positions are modified to sulfotyrosine: Tyr46, Tyr48, and Tyr51. Residues 56–95 are disordered; that stretch reads ETEPPEMLRNSTDTTPLTGPGTPESTTVEPAARRSTGLDA. O-linked (GalNAc...) threonine glycosylation is present at Thr57. Asn65 carries N-linked (GlcNAc...) asparagine glycosylation. The span at 66 to 82 shows a compositional bias: low complexity; the sequence is STDTTPLTGPGTPESTT. Asn111 carries an N-linked (GlcNAc...) asparagine glycan. Tandem repeats lie at residues 122–131, 132–141, 142–151, 162–171, 182–191, 192–201, 202–211, 212–221, 222–231, 232–241, 242–251, and 252–261. The segment at 122-261 is 12 X 10 AA tandem repeats; that stretch reads QTTQPAATEA…QTTPLAAMEA (140 aa). Disordered stretches follow at residues 125–146 and 166–252; these read QPAATEAQTTQPVPTEAQTTPL and LAAT…TEAQ. Asn302 is a glycosylation site (N-linked (GlcNAc...) asparagine). A helical membrane pass occupies residues 321 to 341; that stretch reads LLAILILALVATIFFVCTVVL. The Cytoplasmic segment spans residues 342 to 412; it reads AVRLSRKGHM…DDLTLHSFLP (71 aa). Residues 374–412 form a disordered region; that stretch reads EGPSATANGGLSKAKSPGLTPEPREDREGDDLTLHSFLP. A compositionally biased stretch (basic and acidic residues) spans 395 to 406; that stretch reads EPREDREGDDLT. A Phosphothreonine modification is found at Thr406. The residue at position 409 (Ser409) is a Phosphoserine.

Homodimer; disulfide-linked. Interaction with P-, E- and L-selectins, through their lectin/EGF domains, is required for promoting recruitment and rolling of leukocytes. These interactions require sialyl Lewis X glycan modification but there is a differing dependence for tyrosine sulfations. Sulfation on Tyr-51 of PSGL1 is most important for high affinity L-selectin/SELL binding while P-selectin/SELP requires sulfation on Tyr-48. E-selectin/SELE binds with much lower affinity and requires the sLe(x) epitope, but apparently not tyrosine sulfation. Dimerization appears not to be required for P-selectin/SELP binding. Interacts with SNX20. Interacts with MSN and SYK; mediates the activation of SYK by SELPLG. Interacts with HAVCR1. As to quaternary structure, (Microbial infection) Interacts with enterovirus 71 capsid proteins. In terms of assembly, (Microbial infection) Interacts with Staphylococcus aureus proteins SSL5 and SSL11; these interactions prevent SELPLG-mediated neutrophil rolling. Post-translationally, displays complex, core-2, sialylated and fucosylated O-linked oligosaccharides, at least some of which appear to contain poly-N-acetyllactosamine with varying degrees of substitution. Mainly disialylated or neutral forms of the core-2 tetrasaccharide, Galbeta1--&gt;4GlcNAcbeta1--&gt;6(Galbeta1--&gt;3)GalNAcOH. The GlcN:GalN ratio is approximately 2:1 and the Man:Fuc ratio 3:5. Contains about 14% fucose with alpha-1,3 linkage present in two forms: One species is a disialylated, monofucosylated glycan, and the other, a monosialylated, trifucosylated glycan with a polylactosamine backbone. The fucosylated forms carry the Lewis antigen and are important for interaction with selectins and for functioning in leukocyte rolling. The modification containing the sialyl Lewis X glycan is on Thr-57. No sulfated O-glycans. Some N-glycosylation. Sulfation, in conjunction with the SLe(x)-containing glycan, is necessary for P- and L-selectin binding. High affinity P-selectin binding has a preferred requirement for the isomer sulfated on both Tyr-48 and Tyr-51, whereas L-selectin binding requires predominantly sulfation on Tyr-51 with sulfation on Tyr-48 playing only a minor role. These sulfations play an important role in L- and P-selectin-mediated neutrophil recruitment, and leukocyte rolling. As to expression, expressed on neutrophils, monocytes and most lymphocytes.

The protein localises to the membrane. In terms of biological role, a SLe(x)-type proteoglycan, which through high affinity, calcium-dependent interactions with E-, P- and L-selectins, mediates rapid rolling of leukocytes over vascular surfaces during the initial steps in inflammation. Critical for the initial leukocyte capture. (Microbial infection) Acts as a receptor for enterovirus 71. The chain is P-selectin glycoprotein ligand 1 (SELPLG) from Homo sapiens (Human).